The sequence spans 374 residues: Methylthioribose-1-phosphate isomerase (374 aa).

Ser-2 is subject to N-acetylserine. Asp-253 functions as the Proton donor in the catalytic mechanism.

The protein belongs to the eIF-2B alpha/beta/delta subunits family. MtnA subfamily.

Its subcellular location is the cytoplasm. The protein localises to the nucleus. The catalysed reaction is 5-(methylsulfanyl)-alpha-D-ribose 1-phosphate = 5-(methylsulfanyl)-D-ribulose 1-phosphate. The protein operates within amino-acid biosynthesis; L-methionine biosynthesis via salvage pathway; L-methionine from S-methyl-5-thio-alpha-D-ribose 1-phosphate: step 1/6. Functionally, catalyzes the interconversion of methylthioribose-1-phosphate (MTR-1-P) into methylthioribulose-1-phosphate (MTRu-1-P). The protein is Methylthioribose-1-phosphate isomerase of Arabidopsis thaliana (Mouse-ear cress).